The primary structure comprises 66 residues: Large ribosomal subunit protein uL29 (66 aa).

The protein belongs to the universal ribosomal protein uL29 family.

The protein is Large ribosomal subunit protein uL29 of Ruegeria pomeroyi (strain ATCC 700808 / DSM 15171 / DSS-3) (Silicibacter pomeroyi).